Reading from the N-terminus, the 128-residue chain is Small ribosomal subunit protein uS12 (128 aa).

D89 bears the 3-methylthioaspartic acid mark.

Belongs to the universal ribosomal protein uS12 family. Part of the 30S ribosomal subunit. Contacts proteins S8 and S17. May interact with IF1 in the 30S initiation complex.

Functionally, with S4 and S5 plays an important role in translational accuracy. In terms of biological role, interacts with and stabilizes bases of the 16S rRNA that are involved in tRNA selection in the A site and with the mRNA backbone. Located at the interface of the 30S and 50S subunits, it traverses the body of the 30S subunit contacting proteins on the other side and probably holding the rRNA structure together. The combined cluster of proteins S8, S12 and S17 appears to hold together the shoulder and platform of the 30S subunit. This chain is Small ribosomal subunit protein uS12, found in Campylobacter jejuni subsp. doylei (strain ATCC BAA-1458 / RM4099 / 269.97).